Here is a 454-residue protein sequence, read N- to C-terminus: Golgi reassembly-stacking protein 2 (454 aa).

The N-myristoyl glycine moiety is linked to residue Gly-2. PDZ GRASP-type domains are found at residues Glu-15–Phe-105 and Asn-111–Leu-199. The tract at residues Glu-15–Leu-215 is GRASP. Dimethylated arginine is present on residues Arg-30 and Arg-47. The tract at residues Ile-194–Leu-199 is important for membrane binding. A Phosphoserine modification is found at Ser-214. Thr-222 bears the Phosphothreonine mark. A Phosphothreonine; by MAPK modification is found at Thr-225. The tract at residues Glu-377–Ser-454 is disordered. Ser-411 carries the phosphoserine modification. Position 435 is a phosphothreonine (Thr-435). Ser-443 and Ser-451 each carry phosphoserine.

This sequence belongs to the GORASP family. As to quaternary structure, homodimer. Homooligomer. ER stress induces phosphorylation-dependent monomerization. Interacts with BLZF1/Golgin 45. Identified in a complex with RAB2 and GORASP2. Interacts with JAM2 and JAM3. Interacts with members of the p24 cargo receptors. Interacts with CNIH1 and the cytoplasmic domain of transmembrane TGFA, prior its transit in the trans-Golgi. Interacts with KCTD5. Interacts with TMED2 and TMED3. Interacts with SEC16A in response to ER stress. Interacts (via PDZ GRASP-type 1 domain) with core-glycosylated CFTR in response to ER stress. Post-translationally, myristoylated. Myristoylation is essential for the Golgi targeting. Palmitoylated. In terms of processing, phosphorylated in mitotic cells. ER stress-induced phosphorylation at Ser-443 induces monomerization and subsequent relocalization from Golgi to ER which is essential for mediating unconventional (ER/Golgi-independent) trafficking of CFTR to the cell membrane. As to expression, detected in lung, brain, heart, liver and testis.

Its subcellular location is the golgi apparatus membrane. It localises to the endoplasmic reticulum membrane. The protein resides in the golgi apparatus. In terms of biological role, key structural protein of the Golgi apparatus. The membrane cisternae of the Golgi apparatus adhere to each other to form stacks, which are aligned side by side to form the Golgi ribbon. Acting in concert with GORASP1/GRASP65, is required for the formation and maintenance of the Golgi ribbon, and may be dispensable for the formation of stacks. However, other studies suggest that GORASP2 plays a role in the assembly and membrane stacking of the Golgi cisternae, and in the process by which Golgi stacks reform after breakdown during mitosis and meiosis. May regulate the intracellular transport and presentation of a defined set of transmembrane proteins, such as transmembrane TGFA. Required for normal acrosome formation during spermiogenesis and normal male fertility, probably by promoting colocalization of JAM2 and JAM3 at contact sites between germ cells and Sertoli cells. Mediates ER stress-induced unconventional (ER/Golgi-independent) trafficking of core-glycosylated CFTR to cell membrane. The protein is Golgi reassembly-stacking protein 2 (Gorasp2) of Rattus norvegicus (Rat).